A 752-amino-acid chain; its full sequence is Phosphoribosylformylglycinamidine synthase subunit PurL (752 aa).

Residue histidine 58 is part of the active site. The ATP site is built by tyrosine 61 and lysine 103. Glutamate 105 lines the Mg(2+) pocket. Residues 106-109 (SHNH) and arginine 128 each bind substrate. The active-site Proton acceptor is the histidine 107. Aspartate 129 is a Mg(2+) binding site. Glutamine 253 lines the substrate pocket. Aspartate 281 is a Mg(2+) binding site. A substrate-binding site is contributed by 325-327 (ESQ). 2 residues coordinate ATP: aspartate 513 and glycine 550. Asparagine 551 lines the Mg(2+) pocket. A substrate-binding site is contributed by serine 553.

Belongs to the FGAMS family. In terms of assembly, monomer. Part of the FGAM synthase complex composed of 1 PurL, 1 PurQ and 2 PurS subunits.

Its subcellular location is the cytoplasm. It carries out the reaction N(2)-formyl-N(1)-(5-phospho-beta-D-ribosyl)glycinamide + L-glutamine + ATP + H2O = 2-formamido-N(1)-(5-O-phospho-beta-D-ribosyl)acetamidine + L-glutamate + ADP + phosphate + H(+). It participates in purine metabolism; IMP biosynthesis via de novo pathway; 5-amino-1-(5-phospho-D-ribosyl)imidazole from N(2)-formyl-N(1)-(5-phospho-D-ribosyl)glycinamide: step 1/2. Functionally, part of the phosphoribosylformylglycinamidine synthase complex involved in the purines biosynthetic pathway. Catalyzes the ATP-dependent conversion of formylglycinamide ribonucleotide (FGAR) and glutamine to yield formylglycinamidine ribonucleotide (FGAM) and glutamate. The FGAM synthase complex is composed of three subunits. PurQ produces an ammonia molecule by converting glutamine to glutamate. PurL transfers the ammonia molecule to FGAR to form FGAM in an ATP-dependent manner. PurS interacts with PurQ and PurL and is thought to assist in the transfer of the ammonia molecule from PurQ to PurL. The protein is Phosphoribosylformylglycinamidine synthase subunit PurL of Streptomyces coelicolor (strain ATCC BAA-471 / A3(2) / M145).